We begin with the raw amino-acid sequence, 780 residues long: ATP-dependent 6-phosphofructokinase, muscle type (780 aa).

Position 2 is an N-acetylthreonine (Thr-2). Residues 2-390 (THEEHHAAKT…NWEVYKLLAH (389 aa)) form an N-terminal catalytic PFK domain 1 region. ATP-binding positions include Gly-25, 88-89 (RC), and 118-121 (GDGS). Asp-119 is a Mg(2+) binding site. Ser-133 carries the post-translational modification Phosphoserine. Residues 164-166 (SID), Arg-201, 208-210 (MGR), Glu-264, Arg-292, and 298-301 (HVQR) contribute to the substrate site. The active-site Proton acceptor is the Asp-166. The residue at position 377 (Ser-377) is a Phosphoserine. The interval 391–401 (IRPPVSKSGSH) is interdomain linker. Positions 402-780 (TVAVMNVGAP…SRKRSGEAPA (379 aa)) are C-terminal regulatory PFK domain 2. Beta-D-fructose 2,6-bisphosphate contacts are provided by residues Arg-471 and 528–532 (TVSNN). Ser-530 is a glycosylation site (O-linked (GlcNAc) serine). The residue at position 557 (Lys-557) is an N6-(2-hydroxyisobutyryl)lysine. Residues Arg-566, 573–575 (MGG), Glu-629, Arg-655, and 661–664 (HMQQ) each bind beta-D-fructose 2,6-bisphosphate. Ser-667 carries the phosphoserine modification. Beta-D-fructose 2,6-bisphosphate is bound at residue Arg-735. At Ser-775 the chain carries Phosphoserine.

This sequence belongs to the phosphofructokinase type A (PFKA) family. ATP-dependent PFK group I subfamily. Eukaryotic two domain clade 'E' sub-subfamily. In terms of assembly, homo- and heterotetramers. Phosphofructokinase (PFK) enzyme functions as a tetramer composed of different combinations of 3 types of subunits, called PFKM (M), PFKL (L) and PFKP (P). The composition of the PFK tetramer differs according to the tissue type it is present in. The kinetic and regulatory properties of the tetrameric enzyme are dependent on the subunit composition, hence can vary across tissues. Interacts (via C-terminus) with HK1 (via N-terminal spermatogenic cell-specific region). Requires Mg(2+) as cofactor. In terms of processing, glcNAcylation decreases enzyme activity.

The protein localises to the cytoplasm. The enzyme catalyses beta-D-fructose 6-phosphate + ATP = beta-D-fructose 1,6-bisphosphate + ADP + H(+). It functions in the pathway carbohydrate degradation; glycolysis; D-glyceraldehyde 3-phosphate and glycerone phosphate from D-glucose: step 3/4. With respect to regulation, allosterically activated by ADP, AMP, or fructose 2,6-bisphosphate, and allosterically inhibited by ATP or citrate. Its function is as follows. Catalyzes the phosphorylation of D-fructose 6-phosphate to fructose 1,6-bisphosphate by ATP, the first committing step of glycolysis. This Equus caballus (Horse) protein is ATP-dependent 6-phosphofructokinase, muscle type (PFKM).